Here is a 415-residue protein sequence, read N- to C-terminus: Serine hydroxymethyltransferase (415 aa).

(6S)-5,6,7,8-tetrahydrofolate contacts are provided by residues L122 and 126–128 (GHL). An N6-(pyridoxal phosphate)lysine modification is found at K230.

It belongs to the SHMT family. As to quaternary structure, homodimer. The cofactor is pyridoxal 5'-phosphate.

Its subcellular location is the cytoplasm. It carries out the reaction (6R)-5,10-methylene-5,6,7,8-tetrahydrofolate + glycine + H2O = (6S)-5,6,7,8-tetrahydrofolate + L-serine. It participates in one-carbon metabolism; tetrahydrofolate interconversion. It functions in the pathway amino-acid biosynthesis; glycine biosynthesis; glycine from L-serine: step 1/1. Its function is as follows. Catalyzes the reversible interconversion of serine and glycine with tetrahydrofolate (THF) serving as the one-carbon carrier. This reaction serves as the major source of one-carbon groups required for the biosynthesis of purines, thymidylate, methionine, and other important biomolecules. Also exhibits THF-independent aldolase activity toward beta-hydroxyamino acids, producing glycine and aldehydes, via a retro-aldol mechanism. The protein is Serine hydroxymethyltransferase of Cupriavidus taiwanensis (strain DSM 17343 / BCRC 17206 / CCUG 44338 / CIP 107171 / LMG 19424 / R1) (Ralstonia taiwanensis (strain LMG 19424)).